The primary structure comprises 365 residues: UDP-N-acetylglucosamine--N-acetylmuramyl-(pentapeptide) pyrophosphoryl-undecaprenol N-acetylglucosamine transferase (365 aa).

Residues 17-19 (TGG), Asn-129, Arg-167, Ser-194, Ile-250, 269-274 (ALTVSE), and Gln-295 contribute to the UDP-N-acetyl-alpha-D-glucosamine site.

Belongs to the glycosyltransferase 28 family. MurG subfamily.

The protein resides in the cell inner membrane. The enzyme catalyses di-trans,octa-cis-undecaprenyl diphospho-N-acetyl-alpha-D-muramoyl-L-alanyl-D-glutamyl-meso-2,6-diaminopimeloyl-D-alanyl-D-alanine + UDP-N-acetyl-alpha-D-glucosamine = di-trans,octa-cis-undecaprenyl diphospho-[N-acetyl-alpha-D-glucosaminyl-(1-&gt;4)]-N-acetyl-alpha-D-muramoyl-L-alanyl-D-glutamyl-meso-2,6-diaminopimeloyl-D-alanyl-D-alanine + UDP + H(+). Its pathway is cell wall biogenesis; peptidoglycan biosynthesis. Cell wall formation. Catalyzes the transfer of a GlcNAc subunit on undecaprenyl-pyrophosphoryl-MurNAc-pentapeptide (lipid intermediate I) to form undecaprenyl-pyrophosphoryl-MurNAc-(pentapeptide)GlcNAc (lipid intermediate II). The polypeptide is UDP-N-acetylglucosamine--N-acetylmuramyl-(pentapeptide) pyrophosphoryl-undecaprenol N-acetylglucosamine transferase (Shewanella woodyi (strain ATCC 51908 / MS32)).